The chain runs to 964 residues: Chaperone protein ClpB4, mitochondrial (964 aa).

Residues 1-39 (MALRRLSKSVSSAIKAQYTLSRPSPLLRSRSLSSSPHYT) constitute a mitochondrion transit peptide. The 145-residue stretch at 83–227 (VNQNEFTEMA…KDAIKDVRGD (145 aa)) folds into the Clp R domain. 2 repeat regions span residues 88 to 153 (FTEM…ISKQ) and 164 to 227 (LGSS…VRGD). The segment at 242-490 (LEKYGNDLTE…KLKMEITSKP (249 aa)) is i. ATP-binding positions include 287 to 294 (GEPGVGKT) and 690 to 697 (GPTGVGKT). The tract at residues 616–807 (VTDLDIAEIV…VVIMTSNIGS (192 aa)) is II.

Belongs to the ClpA/ClpB family.

Its subcellular location is the mitochondrion. Functionally, molecular chaperone that does not seem to be involved in heat stress response or tolerance. The polypeptide is Chaperone protein ClpB4, mitochondrial (CLPB4) (Arabidopsis thaliana (Mouse-ear cress)).